Here is a 124-residue protein sequence, read N- to C-terminus: Large ribosomal subunit protein bL12 (124 aa).

The protein belongs to the bacterial ribosomal protein bL12 family. In terms of assembly, homodimer. Part of the ribosomal stalk of the 50S ribosomal subunit. Forms a multimeric L10(L12)X complex, where L10 forms an elongated spine to which 2 to 4 L12 dimers bind in a sequential fashion. Binds GTP-bound translation factors.

Functionally, forms part of the ribosomal stalk which helps the ribosome interact with GTP-bound translation factors. Is thus essential for accurate translation. This chain is Large ribosomal subunit protein bL12, found in Xanthobacter autotrophicus (strain ATCC BAA-1158 / Py2).